Consider the following 270-residue polypeptide: Dermonecrotic toxin LsaSicTox-alphaIB1av (270 aa).

Histidine 2 is a catalytic residue. Mg(2+) is bound by residues glutamate 22 and aspartate 24. Histidine 38 (nucleophile) is an active-site residue. 2 disulfide bridges follow: cysteine 42–cysteine 48 and cysteine 44–cysteine 187. Aspartate 82 provides a ligand contact to Mg(2+).

This sequence belongs to the arthropod phospholipase D family. Class II subfamily. Mg(2+) is required as a cofactor. Expressed by the venom gland.

Its subcellular location is the secreted. It carries out the reaction an N-(acyl)-sphingosylphosphocholine = an N-(acyl)-sphingosyl-1,3-cyclic phosphate + choline. It catalyses the reaction an N-(acyl)-sphingosylphosphoethanolamine = an N-(acyl)-sphingosyl-1,3-cyclic phosphate + ethanolamine. The enzyme catalyses a 1-acyl-sn-glycero-3-phosphocholine = a 1-acyl-sn-glycero-2,3-cyclic phosphate + choline. The catalysed reaction is a 1-acyl-sn-glycero-3-phosphoethanolamine = a 1-acyl-sn-glycero-2,3-cyclic phosphate + ethanolamine. Dermonecrotic toxins cleave the phosphodiester linkage between the phosphate and headgroup of certain phospholipids (sphingolipid and lysolipid substrates), forming an alcohol (often choline) and a cyclic phosphate. This toxin acts on sphingomyelin (SM). It may also act on ceramide phosphoethanolamine (CPE), lysophosphatidylcholine (LPC) and lysophosphatidylethanolamine (LPE), but not on lysophosphatidylserine (LPS), and lysophosphatidylglycerol (LPG). It acts by transphosphatidylation, releasing exclusively cyclic phosphate products as second products. Induces dermonecrosis, hemolysis, increased vascular permeability, edema, inflammatory response, and platelet aggregation. The protein is Dermonecrotic toxin LsaSicTox-alphaIB1av of Loxosceles sabina (Tucson recluse spider).